The primary structure comprises 152 residues: Large ribosomal subunit protein bL9 (152 aa).

It belongs to the bacterial ribosomal protein bL9 family.

In terms of biological role, binds to the 23S rRNA. This chain is Large ribosomal subunit protein bL9, found in Mycobacterium leprae (strain Br4923).